The chain runs to 1029 residues: Error-prone DNA polymerase (1029 aa).

Belongs to the DNA polymerase type-C family. DnaE2 subfamily.

It is found in the cytoplasm. The enzyme catalyses DNA(n) + a 2'-deoxyribonucleoside 5'-triphosphate = DNA(n+1) + diphosphate. Functionally, DNA polymerase involved in damage-induced mutagenesis and translesion synthesis (TLS). It is not the major replicative DNA polymerase. The polypeptide is Error-prone DNA polymerase (Saccharophagus degradans (strain 2-40 / ATCC 43961 / DSM 17024)).